Consider the following 142-residue polypeptide: Putative pre-16S rRNA nuclease (142 aa).

It belongs to the YqgF nuclease family.

Its subcellular location is the cytoplasm. Functionally, could be a nuclease involved in processing of the 5'-end of pre-16S rRNA. This Staphylococcus saprophyticus subsp. saprophyticus (strain ATCC 15305 / DSM 20229 / NCIMB 8711 / NCTC 7292 / S-41) protein is Putative pre-16S rRNA nuclease.